The primary structure comprises 377 residues: Gap junction gamma-1 protein (377 aa).

Topologically, residues 1 to 18 (MSWSFLTRLLEEINNHST) are cytoplasmic. Residues 19-39 (FVGKVWLTVLIIFRIVLTAVG) form a helical membrane-spanning segment. The Extracellular segment spans residues 40–75 (GESIYYDEQSKFTCNTQQPGCENVCYDAFAPLSHVR). Residues 76-96 (FWVFQIILITTPSIMYLGFAM) form a helical membrane-spanning segment. Residues 97-174 (HRIARQPEMQ…RRIKQDGLMK (78 aa)) are Cytoplasmic-facing. Residues 129 to 163 (DYEEAEDNQEEDPMICEEEEPEKDSEKGDKKKHDG) are disordered. Residues 131-151 (EEAEDNQEEDPMICEEEEPEK) are compositionally biased toward acidic residues. The helical transmembrane segment at 175-197 (VYVLQLLFRSVFEVGFLMGQYIL) threads the bilayer. Topologically, residues 198-228 (YGFEVIPFFVCSRKPCPHTVDCFVSRPTEKT) are extracellular. Residues 229-249 (IFLLIMYAVSALCLFLNLCEL) traverse the membrane as a helical segment. At 250–377 (FHLGIGGIRD…GVGNREKSGL (128 aa)) the chain is on the cytoplasmic side. Disordered regions lie at residues 265–294 (KKELQESRKKTPSAPPNYHSVLKKGRLPNG) and 334–377 (LNPT…KSGL). Residues 337-362 (TGDNTHASRSSSPESNSIAAEQNRLN) show a composition bias toward polar residues.

The protein belongs to the connexin family. Gamma-type subfamily. As to quaternary structure, a connexon is composed of a hexamer of connexins.

It is found in the cell membrane. Its subcellular location is the cell junction. The protein resides in the gap junction. Functionally, one gap junction consists of a cluster of closely packed pairs of transmembrane channels, the connexons, through which materials of low MW diffuse from one cell to a neighboring cell. The chain is Gap junction gamma-1 protein (gjc1) from Xenopus tropicalis (Western clawed frog).